We begin with the raw amino-acid sequence, 4349 residues long: Dynein heavy chain, cytoplasmic (4349 aa).

The stem stretch occupies residues 1–1907; sequence MEVTSAAAPS…YIKMANAKLN (1907 aa). Coiled-coil stretches lie at residues 459 to 480, 1178 to 1215, 1266 to 1293, 1334 to 1354, 1560 to 1577, and 1640 to 1670; these read WEEN…RNEK, LMKF…STAQ, SQWE…QAKI, ESRI…KEAL, YKEF…LNRV, and NIPN…EKER. AAA regions lie at residues 1908–2133, 2201–2459, 2565–2814, and 2908–3177; these read YGFE…VLVS, NAIR…FTTA, EVNT…WVRG, and TFCE…QGKV. 1946 to 1953 lines the ATP pocket; it reads GPAGTGKT. The stretch at 2194 to 2217 forms a coiled coil; that stretch reads ANLEALENAIRELAAERHLVVNEL. ATP-binding positions include 2239 to 2246, 2604 to 2611, and 2946 to 2953; these read GNSGSGKS, GPPGSGKT, and GVSGSGKT. Coiled-coil stretches lie at residues 3186–3294, 3420–3477, and 3774–3807; these read LDFV…LAKA, GPLK…EMSR, and DNVI…VEEI. The stalk stretch occupies residues 3186–3477; the sequence is LDFVTQYIKL…TQAIKAEMSR (292 aa). AAA stretches follow at residues 3563–3792 and 4001–4213; these read LSTA…EISA and AERF…IVDT.

The protein belongs to the dynein heavy chain family. In terms of assembly, consists of at least two heavy chains and a number of intermediate and light chains.

It localises to the cytoplasm. The protein localises to the cytoskeleton. In terms of biological role, cytoplasmic dynein acts as a motor for the intracellular retrograde motility of vesicles and organelles along microtubules. Dynein has ATPase activity; the force-producing power stroke is thought to occur on release of ADP. This is Dynein heavy chain, cytoplasmic (DHC1) from Fusarium vanettenii (Neocosmospora pisi).